The following is a 397-amino-acid chain: RNA pseudouridine synthase 5 (397 aa).

The 51-residue stretch at 64 to 114 (APLPGWIKRIRDGQITVDGEVATDPDMILREGSKLVYHRLPWQEPFAPHLL) folds into the S4 RNA-binding domain.

The protein belongs to the pseudouridine synthase RluA family.

It catalyses the reaction a uridine in RNA = a pseudouridine in RNA. In Oryza sativa subsp. japonica (Rice), this protein is RNA pseudouridine synthase 5.